We begin with the raw amino-acid sequence, 133 residues long: Small ribosomal subunit protein uS8 (133 aa).

Belongs to the universal ribosomal protein uS8 family. Part of the 30S ribosomal subunit. Contacts proteins S5 and S12.

In terms of biological role, one of the primary rRNA binding proteins, it binds directly to 16S rRNA central domain where it helps coordinate assembly of the platform of the 30S subunit. This chain is Small ribosomal subunit protein uS8, found in Cyanothece sp. (strain PCC 7425 / ATCC 29141).